We begin with the raw amino-acid sequence, 977 residues long: Short transient receptor potential channel 4 (977 aa).

The Cytoplasmic portion of the chain corresponds to 1-324 (MAQFYYKRNV…YDEFPGWRRR (324 aa)). ANK repeat units follow at residues 29–60 (LSPS…IYFK), 71–93 (RTAL…LSFN), 96–118 (VGDA…LLNH), and 141–165 (PDIT…VQKG). Zn(2+) contacts are provided by His172, Cys176, Cys178, and Cys181. Positions 223–260 (LSWELQELSKVENEFKSEYEELSRQCKQFAKDLLDQTR) form a coiled coil. The segment at residues 325 to 359 (HWAVKMVTCFIIGLLFPVFSVCYLIAPKSPLGLFI) is an intramembrane region (discontinuously helical). Residues 360 to 362 (RKP) are Cytoplasmic-facing. The chain crosses the membrane as a helical span at residues 363-383 (FIKFICHTASYLTFLFLLLLA). The Extracellular portion of the chain corresponds to 384 to 403 (SQHIDRSDLNRQGPPPTIVE). Residues 404 to 418 (WMILPWVLGFIWGEI) traverse the membrane as a helical segment. Ca(2+)-binding residues include Glu417, Gln420, Asn435, and Asp438. The Cytoplasmic portion of the chain corresponds to 419–432 (KQMWDGGLQDYIHD). The helical transmembrane segment at 433-453 (WWNLMDFVMNSLYLATISLKI) threads the bilayer. Topologically, residues 454–475 (VAFVKYSALNPRESWDMWHPTL) are extracellular. The chain crosses the membrane as a helical span at residues 476–498 (VAEALFAIANIFSSLRLISLFTA). Topologically, residues 499 to 511 (NSHLGPLQISLGR) are cytoplasmic. A helical transmembrane segment spans residues 512–534 (MLLDILKFLFIYCLVLLAFANGL). Topologically, residues 535–599 (NQLYFYYEET…HEFTEFVGAT (65 aa)) are extracellular. A disulfide bridge connects residues Cys549 and Cys554. Residues 600-620 (MFGTYNVISLVVLLNMLIAMM) traverse the membrane as a helical segment. The segment at 615–977 (MLIAMMNNSY…THEDYVTTRL (363 aa)) is interaction with ITPR1, ITPR2 and ITPR3. The Cytoplasmic portion of the chain corresponds to 621 to 977 (NNSYQLIADH…THEDYVTTRL (357 aa)). The tract at residues 762–790 (IQSANASKESSNSADSDEKSDSEGNSKDK) is disordered. A compositionally biased stretch (low complexity) spans 764–775 (SANASKESSNSA). The segment covering 777 to 788 (SDEKSDSEGNSK) has biased composition (basic and acidic residues). Phosphotyrosine; by FYN is present on residues Tyr959 and Tyr972. Residues 975–977 (TRL) are PDZ-binding domain.

Belongs to the transient receptor (TC 1.A.4) family. STrpC subfamily. TRPC4 sub-subfamily. Homotetramer. Heterotetramer with TRPC1 and/or TRPC5. Forms a heteromeric ion channel with TRPC1, with a 1:3 TRPC1:TRPC4 stoichiometry. Interacts with TRPC4AP. Isoform alpha but not isoform beta interacts with ITPR1, ITPR2 and ITPR3. Interacts with (via PDZ-binding domain) with NHERF1. Interacts with MX1 and RNF24. Interacts (via CIRB domain) with SESTD1 (via spectrin 1 repeat). Interacts with CDH5 and CTNNB1. Interacts with SPTAN1 (via C-terminal spectrin repeats) and SPTBN5 (via C-terminus). Interacts (via protein 4.1-binding domain) with EPB41L2. Interacts with PLSCR1. In terms of processing, phosphorylation modulates TRPC channel function by regulating the level of TRPC4 at the cell surface and by increasing the association with NHERF1. In terms of tissue distribution, strongly expressed in placenta. Expressed at lower levels in heart, pancreas, kidney and brain. Expressed in endothelial cells. Isoform alpha was found to be the predominant isoform. Isoform beta was not found in pancreas and brain.

The protein resides in the cell membrane. It carries out the reaction Ca(2+)(in) = Ca(2+)(out). The catalysed reaction is Na(+)(in) = Na(+)(out). The enzyme catalyses Li(+)(in) = Li(+)(out). It catalyses the reaction Cs(+)(in) = Cs(+)(out). May be operated by a phosphatidylinositol second messenger system activated by receptor tyrosine kinases or G-protein coupled receptors. May be activated by intracellular calcium store depletion. Inhibited by xanthine-based inhibitor Pico145. Functionally, forms a receptor-activated non-selective calcium permeant cation channel. Acts as a cell-cell contact-dependent endothelial calcium entry channel. Forms a homomeric ion channel or a heteromeric ion channel with TRPC1; the heteromeric ion channel has reduced calcium permeability compared to the homomeric channel. Also permeable to monovalent ions including sodium, lithium and cesium ions. Its function is as follows. Forms a receptor-activated non-selective calcium permeant cation channel. The protein is Short transient receptor potential channel 4 (TRPC4) of Homo sapiens (Human).